Consider the following 177-residue polypeptide: Preprotein translocase subunit SECE1 (177 aa).

A chloroplast-targeting transit peptide spans 1-38 (MSLTAQFSPPVTGITRSLRDTKPSLSNLRVFPVYTEIR). The disordered stretch occupies residues 60 to 87 (RDTAGSESESEATPSPAEESGSGEDKEV). Residues 64–79 (GSESESEATPSPAEES) show a composition bias toward low complexity. Residues 140–160 (VVLGVIAGSSVVLLTVNFLLA) traverse the membrane as a helical segment.

This sequence belongs to the SecE/SEC61-gamma family. As to quaternary structure, part of the Sec protein translocation apparatus. Interacts with SCY1 and ALB3.

It localises to the plastid. Its subcellular location is the chloroplast thylakoid membrane. Its function is as follows. Involved in the import/insertion pathway in the thylakoids. The signal recognition particle is not involved in the insertion of SECE1 in the thylakoid membrane. This Arabidopsis thaliana (Mouse-ear cress) protein is Preprotein translocase subunit SECE1 (SECE1).